The following is a 336-amino-acid chain: Galactinol synthase 6 (336 aa).

K106 is a catalytic residue. 3 residues coordinate Mn(2+): D122, D124, and H260.

This sequence belongs to the glycosyltransferase 8 family. Galactosyltransferase subfamily. A divalent metal cation is required as a cofactor.

The protein localises to the cytoplasm. The catalysed reaction is myo-inositol + UDP-alpha-D-galactose = alpha-D-galactosyl-(1-&gt;3)-1D-myo-inositol + UDP + H(+). Its function is as follows. Galactinol synthase involved in the biosynthesis of raffinose family oligosaccharides (RFOs) that function as osmoprotectants. May promote plant stress tolerance. This chain is Galactinol synthase 6 (GOLS6), found in Arabidopsis thaliana (Mouse-ear cress).